A 344-amino-acid polypeptide reads, in one-letter code: Glyceraldehyde-3-phosphate dehydrogenase (344 aa).

Residues 11–12 (TI) and Gly-110 contribute to the NAD(+) site. Position 139–141 (139–141 (SCN)) interacts with D-glyceraldehyde 3-phosphate. Cys-140 (nucleophile) is an active-site residue. Arg-169 provides a ligand contact to NAD(+). 195 to 196 (HG) lines the D-glyceraldehyde 3-phosphate pocket. Position 302 (Gln-302) interacts with NAD(+).

This sequence belongs to the glyceraldehyde-3-phosphate dehydrogenase family. Homotetramer.

Its subcellular location is the cytoplasm. The catalysed reaction is D-glyceraldehyde 3-phosphate + phosphate + NADP(+) = (2R)-3-phospho-glyceroyl phosphate + NADPH + H(+). It catalyses the reaction D-glyceraldehyde 3-phosphate + phosphate + NAD(+) = (2R)-3-phospho-glyceroyl phosphate + NADH + H(+). Its pathway is carbohydrate degradation; glycolysis; pyruvate from D-glyceraldehyde 3-phosphate: step 1/5. This chain is Glyceraldehyde-3-phosphate dehydrogenase, found in Pyrobaculum islandicum (strain DSM 4184 / JCM 9189 / GEO3).